The primary structure comprises 113 residues: uncharacterized protein (113 aa).

This sequence belongs to the ycf68 family.

The protein resides in the plastid. It localises to the chloroplast. This is an uncharacterized protein from Eucalyptus globulus subsp. globulus (Tasmanian blue gum).